The following is a 480-amino-acid chain: ESX-1 secretion system ATPase EccB1 (480 aa).

A helical membrane pass occupies residues 44 to 64 (IALGIVVAVLILAGAALLAYF). Positions 461-480 (DTLPADPSPRKVPAGASGAP) are disordered.

This sequence belongs to the EccB family. In terms of assembly, part of the ESX-1 / type VII secretion system (T7SS), which is composed of cytosolic and membrane components. The ESX-1 membrane complex is composed of EccB1, EccCa1, EccCb1, EccD1 and EccE1.

The protein resides in the cell inner membrane. An ATPase. Part of the ESX-1 specialized secretion system, which delivers several virulence factors to host cells during infection, including the key virulence factors EsxA (ESAT-6) and EsxB (CFP-10). The protein is ESX-1 secretion system ATPase EccB1 of Mycobacterium tuberculosis (strain CDC 1551 / Oshkosh).